The following is a 389-amino-acid chain: Phospho-N-acetylmuramoyl-pentapeptide-transferase (389 aa).

The next 10 helical transmembrane spans lie at 21–41 (FITFRAVFATLTALVIGLVTG), 70–90 (GTPTMGGVLILVSIGISTLLW), 97–117 (FIWVVLIVTLGFGAVGWVDDY), 134–154 (YMWQSIIGLFAAIYLAFSVSA), 189–209 (TISYPLGVWGFIALTYFVIVG), 222–242 (GLAIMPTVMVGTALGLFAYLT), 259–279 (AGELIIFCGAMAGAGLAFLWF), 286–306 (VFMGDVGALALGGALGTIAVI), 311–331 (VVLFIMGGIFVVETLSVMLQV), and 366–386 (QVVVRFWIITMMLVLFGLSTL).

This sequence belongs to the glycosyltransferase 4 family. MraY subfamily. Requires Mg(2+) as cofactor.

The protein localises to the cell inner membrane. It catalyses the reaction UDP-N-acetyl-alpha-D-muramoyl-L-alanyl-gamma-D-glutamyl-meso-2,6-diaminopimeloyl-D-alanyl-D-alanine + di-trans,octa-cis-undecaprenyl phosphate = di-trans,octa-cis-undecaprenyl diphospho-N-acetyl-alpha-D-muramoyl-L-alanyl-D-glutamyl-meso-2,6-diaminopimeloyl-D-alanyl-D-alanine + UMP. It participates in cell wall biogenesis; peptidoglycan biosynthesis. In terms of biological role, catalyzes the initial step of the lipid cycle reactions in the biosynthesis of the cell wall peptidoglycan: transfers peptidoglycan precursor phospho-MurNAc-pentapeptide from UDP-MurNAc-pentapeptide onto the lipid carrier undecaprenyl phosphate, yielding undecaprenyl-pyrophosphoryl-MurNAc-pentapeptide, known as lipid I. In Janthinobacterium sp. (strain Marseille) (Minibacterium massiliensis), this protein is Phospho-N-acetylmuramoyl-pentapeptide-transferase.